Reading from the N-terminus, the 581-residue chain is Fibrous sheath-interacting protein 1 (581 aa).

The tract at residues 1–77 (MDIIKGNLDG…SNDDKQESCS (77 aa)) is disordered. The segment covering 14–30 (PASNSRIRPGSRSSNAS) has biased composition (polar residues). The segment covering 52 to 77 (GKEDHSESSNTENRRTSNDDKQESCS) has biased composition (basic and acidic residues). Ser-87 carries the post-translational modification Phosphoserine. Residues 105–153 (EPKLKELDSQLQDAIQKMKKLDKILAKKQRREKEIKKQGLEMRIKLWEE) adopt a coiled-coil conformation. 2 disordered regions span residues 338–365 (SSFSPRLENRNNQKPDRDGERNMEVTPG) and 555–581 (HLKLSSPENTIADEQETKDAAEECKEP). Composition is skewed to basic and acidic residues over residues 344–360 (LENRNNQKPDRDGERNM) and 569–581 (QETKDAAEECKEP).

The protein belongs to the FSIP1 family.

The polypeptide is Fibrous sheath-interacting protein 1 (FSIP1) (Homo sapiens (Human)).